The following is a 263-amino-acid chain: Probable ABC transporter permease protein ycf63 (263 aa).

6 consecutive transmembrane segments (helical) span residues 43–63 (LVGP…SMVF), 82–102 (AVIV…VIIA), 136–156 (LVFP…TISL), 159–179 (SIAI…SIFL), 199–219 (LCFG…SSGG), and 230–250 (SVVT…YFMF).

It belongs to the MlaE permease family.

Its subcellular location is the plastid. It is found in the chloroplast membrane. Could be part of an ABC transporter complex. This is Probable ABC transporter permease protein ycf63 (ycf63) from Porphyra purpurea (Red seaweed).